The sequence spans 465 residues: Ribulose bisphosphate carboxylase large chain (465 aa).

Position 4 is an N6,N6,N6-trimethyllysine (Lys4). Substrate is bound by residues Asn113 and Thr163. Lys165 (proton acceptor) is an active-site residue. Residue Lys167 coordinates substrate. 3 residues coordinate Mg(2+): Lys191, Asp193, and Glu194. At Lys191 the chain carries N6-carboxylysine. The active-site Proton acceptor is the His284. 3 residues coordinate substrate: Arg285, His317, and Ser369.

This sequence belongs to the RuBisCO large chain family. Type I subfamily. As to quaternary structure, heterohexadecamer of 8 large chains and 8 small chains; disulfide-linked. The disulfide link is formed within the large subunit homodimers. The cofactor is Mg(2+). The disulfide bond which can form in the large chain dimeric partners within the hexadecamer appears to be associated with oxidative stress and protein turnover.

It is found in the plastid. It localises to the chloroplast. The enzyme catalyses 2 (2R)-3-phosphoglycerate + 2 H(+) = D-ribulose 1,5-bisphosphate + CO2 + H2O. It carries out the reaction D-ribulose 1,5-bisphosphate + O2 = 2-phosphoglycolate + (2R)-3-phosphoglycerate + 2 H(+). Functionally, ruBisCO catalyzes two reactions: the carboxylation of D-ribulose 1,5-bisphosphate, the primary event in carbon dioxide fixation, as well as the oxidative fragmentation of the pentose substrate in the photorespiration process. Both reactions occur simultaneously and in competition at the same active site. In Idesia polycarpa (Iigiri tree), this protein is Ribulose bisphosphate carboxylase large chain.